Here is a 213-residue protein sequence, read N- to C-terminus: Amelogenin, X isoform (213 aa).

Residues 1 to 16 (MGTWILFACLLGAAFS) form the signal peptide. Position 32 is a phosphoserine (Ser32). Composition is skewed to low complexity over residues 96 to 105 (VPQQPMMPVP) and 114 to 160 (QHHQ…QPLQ). The tract at residues 96-213 (VPQQPMMPVP…TDKTKREEVD (118 aa)) is disordered. Pro residues predominate over residues 161–194 (PLQPQPPVHPIQPLPPQPPLPPIFPMQPLPPMLP).

This sequence belongs to the amelogenin family. In terms of assembly, interacts with KRT5. In terms of processing, phosphorylated by FAM20C in vitro.

It localises to the secreted. The protein localises to the extracellular space. It is found in the extracellular matrix. Its function is as follows. Plays a role in the biomineralization of teeth. Seems to regulate the formation of crystallites during the secretory stage of tooth enamel development. Thought to play a major role in the structural organization and mineralization of developing enamel. The polypeptide is Amelogenin, X isoform (AMELX) (Bos taurus (Bovine)).